Consider the following 270-residue polypeptide: Molybdenum storage protein subunit beta (270 aa).

Octamer consisting of 4 alpha and 4 beta chains.

Its subcellular location is the cytoplasm. Intracellular storage of molybdenum. Binds polyoxomolybdates. Can bind at least 90 molybdenum atoms per protein molecule. This is Molybdenum storage protein subunit beta from Azotobacter vinelandii (strain DJ / ATCC BAA-1303).